A 351-amino-acid polypeptide reads, in one-letter code: MPRRNLLKGFKRPKVLEFLSENSSECYGKFTASPFETGFGTTVGNCLRRVLLSSIQGYAVTGVRITSFDADGVAHFISSEFEQIPHVREDTLEILNNFKRLRFLLPQGAESSTFTYEFRGAVSLTGKDFAKKFQLEVLSQDLLIMEMMDGAHVEVELHVEFGRGYVPAESHDRYADLVGVIPVDAIFSPVLRVRYDIQSCRVGQRGDYDQLSLEVWTDGTVRPEDAIAEAAKIIKEHFTVFVNFDETALDLEDEPEEDDPAVLELLNTKIADVDFSVRARNCLLTMGIKTLGELTRISEQTLANTRNVGKKSLSEIQGKLQEYNLRLGMADYNHVGVVSRLMRQKEEIDEA.

Residues 1–245 (MPRRNLLKGF…EHFTVFVNFD (245 aa)) form an alpha N-terminal domain (alpha-NTD) region. The alpha C-terminal domain (alpha-CTD) stretch occupies residues 261-351 (AVLELLNTKI…MRQKEEIDEA (91 aa)).

It belongs to the RNA polymerase alpha chain family. In terms of assembly, homodimer. The RNAP catalytic core consists of 2 alpha, 1 beta, 1 beta' and 1 omega subunit. When a sigma factor is associated with the core the holoenzyme is formed, which can initiate transcription.

The catalysed reaction is RNA(n) + a ribonucleoside 5'-triphosphate = RNA(n+1) + diphosphate. In terms of biological role, DNA-dependent RNA polymerase catalyzes the transcription of DNA into RNA using the four ribonucleoside triphosphates as substrates. This chain is DNA-directed RNA polymerase subunit alpha, found in Treponema pallidum (strain Nichols).